Here is a 568-residue protein sequence, read N- to C-terminus: Acetyl-coenzyme A carboxylase carboxyl transferase subunits beta/alpha (568 aa).

An acetyl-coenzyme A carboxylase carboxyl transferase subunit beta region spans residues methionine 1–glycine 253. In terms of domain architecture, CoA carboxyltransferase N-terminal spans arginine 21–threonine 290. Positions arginine 21 to glutamate 536 are carboxyltransferase. 4 residues coordinate Zn(2+): cysteine 25, cysteine 28, cysteine 44, and cysteine 47. Residues cysteine 25 to cysteine 47 form a C4-type zinc finger. The interval methionine 254–proline 559 is acetyl-coenzyme A carboxylase carboxyl transferase subunit alpha. Positions arginine 286–glutamate 536 constitute a CoA carboxyltransferase C-terminal domain.

The protein in the N-terminal section; belongs to the AccD/PCCB family. This sequence in the C-terminal section; belongs to the AccA family. In terms of assembly, acetyl-CoA carboxylase is a heterotetramer composed of biotin carboxyl carrier protein (AccB), biotin carboxylase (AccC) and two subunits of ACCase subunit beta/alpha. Zn(2+) is required as a cofactor.

The protein resides in the cytoplasm. The catalysed reaction is N(6)-carboxybiotinyl-L-lysyl-[protein] + acetyl-CoA = N(6)-biotinyl-L-lysyl-[protein] + malonyl-CoA. The protein operates within lipid metabolism; malonyl-CoA biosynthesis; malonyl-CoA from acetyl-CoA: step 1/1. In terms of biological role, component of the acetyl coenzyme A carboxylase (ACC) complex. Biotin carboxylase (BC) catalyzes the carboxylation of biotin on its carrier protein (BCCP) and then the CO(2) group is transferred by the transcarboxylase to acetyl-CoA to form malonyl-CoA. This is Acetyl-coenzyme A carboxylase carboxyl transferase subunits beta/alpha (accD) from Saccharopolyspora erythraea (strain ATCC 11635 / DSM 40517 / JCM 4748 / NBRC 13426 / NCIMB 8594 / NRRL 2338).